The chain runs to 368 residues: Protein trichome birefringence-like 43 (368 aa).

A helical; Signal-anchor for type II membrane protein transmembrane segment spans residues 9-25 (GVVSVMVLMILVLLKQI). The GDS motif motif lies at 117–119 (GDS). Residues 344–358 (DCSHWCLSGVPDSWN) carry the DCXHWCLPGXXDXWN motif motif.

It belongs to the PC-esterase family. TBL subfamily.

Its subcellular location is the membrane. Functionally, may act as a bridging protein that binds pectin and other cell wall polysaccharides. Probably involved in maintaining esterification of pectins. May be involved in the specific O-acetylation of cell wall polymers. In Arabidopsis thaliana (Mouse-ear cress), this protein is Protein trichome birefringence-like 43 (TBL43).